Here is a 124-residue protein sequence, read N- to C-terminus: Small ribosomal subunit protein uS12 (124 aa).

The residue at position 89 (Asp-89) is a 3-methylthioaspartic acid.

This sequence belongs to the universal ribosomal protein uS12 family. As to quaternary structure, part of the 30S ribosomal subunit. Contacts proteins S8 and S17. May interact with IF1 in the 30S initiation complex.

Functionally, with S4 and S5 plays an important role in translational accuracy. Interacts with and stabilizes bases of the 16S rRNA that are involved in tRNA selection in the A site and with the mRNA backbone. Located at the interface of the 30S and 50S subunits, it traverses the body of the 30S subunit contacting proteins on the other side and probably holding the rRNA structure together. The combined cluster of proteins S8, S12 and S17 appears to hold together the shoulder and platform of the 30S subunit. This is Small ribosomal subunit protein uS12 from Caldanaerobacter subterraneus subsp. tengcongensis (strain DSM 15242 / JCM 11007 / NBRC 100824 / MB4) (Thermoanaerobacter tengcongensis).